Reading from the N-terminus, the 71-residue chain is ATP synthase subunit c (71 aa).

2 consecutive transmembrane segments (helical) span residues 5–25 (AIGI…AIIV) and 47–67 (FIGA…AFLL).

It belongs to the ATPase C chain family. F-type ATPases have 2 components, F(1) - the catalytic core - and F(0) - the membrane proton channel. F(1) has five subunits: alpha(3), beta(3), gamma(1), delta(1), epsilon(1). F(0) has three main subunits: a(1), b(2) and c(10-14). The alpha and beta chains form an alternating ring which encloses part of the gamma chain. F(1) is attached to F(0) by a central stalk formed by the gamma and epsilon chains, while a peripheral stalk is formed by the delta and b chains.

The protein localises to the cell membrane. F(1)F(0) ATP synthase produces ATP from ADP in the presence of a proton or sodium gradient. F-type ATPases consist of two structural domains, F(1) containing the extramembraneous catalytic core and F(0) containing the membrane proton channel, linked together by a central stalk and a peripheral stalk. During catalysis, ATP synthesis in the catalytic domain of F(1) is coupled via a rotary mechanism of the central stalk subunits to proton translocation. In terms of biological role, key component of the F(0) channel; it plays a direct role in translocation across the membrane. A homomeric c-ring of between 10-14 subunits forms the central stalk rotor element with the F(1) delta and epsilon subunits. This chain is ATP synthase subunit c, found in Shouchella clausii (strain KSM-K16) (Alkalihalobacillus clausii).